Here is a 398-residue protein sequence, read N- to C-terminus: Phospholipase C (398 aa).

Residues 1–28 (MKRKIYKLLICATIATSLWAVRTTKVYA) form the signal peptide. Trp29, His39, Asp84, His96, His154, Asp158, His164, His176, and Glu180 together coordinate Zn(2+). One can recognise a Zn-dependent PLC domain in the interval 29–278 (WDGKADGTGT…HDVSDGKDSS (250 aa)). Residues 275–283 (KDSSANKNV) are linker. Residues 284–398 (NELVAYITTG…ISGNSTYNIK (115 aa)) form the PLAT domain. Ca(2+) is bound by residues Gly299, Thr300, Asp301, Asp321, Asn322, Gly324, Asn325, Asp326, and Asp365.

Requires Ca(2+) as cofactor. The cofactor is Zn(2+).

The protein resides in the secreted. The catalysed reaction is a 1,2-diacyl-sn-glycero-3-phosphocholine + H2O = phosphocholine + a 1,2-diacyl-sn-glycerol + H(+). Functionally, bacterial hemolysins are exotoxins that attack blood cell membranes and cause cell rupture. Constitutes an essential virulence factor in gas gangrene. Binds to eukaryotic membranes where it hydrolyzes both phosphatidylcholine and sphingomyelin, causing cell rupture. The diacylglycerol produced can activate both the arachidonic acid pathway, leading to modulation of the inflammatory response cascade and thrombosis, and protein kinase C, leading to activation of eukaryotic phospholipases and further membrane damage. This chain is Phospholipase C (plc), found in Clostridium perfringens.